A 502-amino-acid chain; its full sequence is uncharacterized protein (502 aa).

A run of 2 helical transmembrane segments spans residues 10 to 30 (NLTL…IXIF) and 473 to 493 (FSLI…FGLV).

Its subcellular location is the cell membrane. This is an uncharacterized protein from Borreliella burgdorferi (strain ATCC 35210 / DSM 4680 / CIP 102532 / B31) (Borrelia burgdorferi).